The sequence spans 313 residues: Ribosomal RNA small subunit methyltransferase H (313 aa).

Residues 35 to 37 (GGH), aspartate 55, phenylalanine 79, aspartate 101, and glutamine 108 contribute to the S-adenosyl-L-methionine site.

It belongs to the methyltransferase superfamily. RsmH family.

It localises to the cytoplasm. The enzyme catalyses cytidine(1402) in 16S rRNA + S-adenosyl-L-methionine = N(4)-methylcytidine(1402) in 16S rRNA + S-adenosyl-L-homocysteine + H(+). In terms of biological role, specifically methylates the N4 position of cytidine in position 1402 (C1402) of 16S rRNA. This Shigella dysenteriae serotype 1 (strain Sd197) protein is Ribosomal RNA small subunit methyltransferase H.